Here is a 372-residue protein sequence, read N- to C-terminus: Dual-specificity RNA methyltransferase RlmN (372 aa).

Glutamate 94 acts as the Proton acceptor in catalysis. The 240-residue stretch at 100 to 339 folds into the Radical SAM core domain; that stretch reads DGDRATLCVS…VTIRKTRGDD (240 aa). A disulfide bond links cysteine 107 and cysteine 344. Cysteine 114, cysteine 118, and cysteine 121 together coordinate [4Fe-4S] cluster. Residues 168-169, serine 200, 222-224, and asparagine 301 each bind S-adenosyl-L-methionine; these read GE and SLH. Catalysis depends on cysteine 344, which acts as the S-methylcysteine intermediate.

It belongs to the radical SAM superfamily. RlmN family. [4Fe-4S] cluster is required as a cofactor.

It is found in the cytoplasm. It carries out the reaction adenosine(2503) in 23S rRNA + 2 reduced [2Fe-2S]-[ferredoxin] + 2 S-adenosyl-L-methionine = 2-methyladenosine(2503) in 23S rRNA + 5'-deoxyadenosine + L-methionine + 2 oxidized [2Fe-2S]-[ferredoxin] + S-adenosyl-L-homocysteine. The catalysed reaction is adenosine(37) in tRNA + 2 reduced [2Fe-2S]-[ferredoxin] + 2 S-adenosyl-L-methionine = 2-methyladenosine(37) in tRNA + 5'-deoxyadenosine + L-methionine + 2 oxidized [2Fe-2S]-[ferredoxin] + S-adenosyl-L-homocysteine. Specifically methylates position 2 of adenine 2503 in 23S rRNA and position 2 of adenine 37 in tRNAs. m2A2503 modification seems to play a crucial role in the proofreading step occurring at the peptidyl transferase center and thus would serve to optimize ribosomal fidelity. This chain is Dual-specificity RNA methyltransferase RlmN, found in Aliivibrio fischeri (strain MJ11) (Vibrio fischeri).